A 391-amino-acid chain; its full sequence is Phosphopentomutase (391 aa).

6 residues coordinate Mn(2+): Asp12, Asp285, His290, Asp326, His327, and His338.

This sequence belongs to the phosphopentomutase family. It depends on Mn(2+) as a cofactor.

The protein localises to the cytoplasm. The catalysed reaction is 2-deoxy-alpha-D-ribose 1-phosphate = 2-deoxy-D-ribose 5-phosphate. It catalyses the reaction alpha-D-ribose 1-phosphate = D-ribose 5-phosphate. The protein operates within carbohydrate degradation; 2-deoxy-D-ribose 1-phosphate degradation; D-glyceraldehyde 3-phosphate and acetaldehyde from 2-deoxy-alpha-D-ribose 1-phosphate: step 1/2. Isomerase that catalyzes the conversion of deoxy-ribose 1-phosphate (dRib-1-P) and ribose 1-phosphate (Rib-1-P) to deoxy-ribose 5-phosphate (dRib-5-P) and ribose 5-phosphate (Rib-5-P), respectively. In Herpetosiphon aurantiacus (strain ATCC 23779 / DSM 785 / 114-95), this protein is Phosphopentomutase.